The primary structure comprises 465 residues: Nuclear pore complex protein NUP50B (465 aa).

Disordered stretches follow at residues Met-1–Thr-44 and Arg-59–His-244. Residue Gly-2 is modified to N-acetylglycine. Residues Gly-26 to Ser-35 show a composition bias toward acidic residues. Residues Pro-81–Pro-97 show a composition bias toward low complexity. Composition is skewed to basic and acidic residues over residues Thr-105 to Ala-127, Ile-141 to Ser-157, and Thr-216 to Gly-233. A Phosphoserine modification is found at Ser-125. 3 tandem repeats follow at residues Phe-266–Gly-267, Phe-286–Gly-287, and Phe-297–Gly-298. The segment at Phe-266 to Gly-298 is 3 X 2 AA repeats of F-G. Disordered stretches follow at residues Lys-308 to Asn-330 and His-439 to Ala-465. A Phosphothreonine modification is found at Thr-455. Over residues Pro-456–Ala-465 the composition is skewed to polar residues. The residue at position 459 (Ser-459) is a Phosphoserine.

As to quaternary structure, part of the nuclear pore complex (NPC). The NPC has an eight-fold symmetrical structure comprising a central transport channel and two rings, the cytoplasmic and nuclear rings, to which eight filaments are attached. The cytoplasmic filaments have loose ends, while the nuclear filaments are joined in a distal ring, forming a nuclear basket. NPCs are highly dynamic in configuration and composition, and can be devided in 3 subcomplexes, the NUP62 subcomplex, the NUP107-160 subcomplex and the NUP93 subcomplex, containing approximately 30 different nucleoporin proteins.

Its subcellular location is the nucleus. It is found in the nucleoplasm. It localises to the nuclear pore complex. Its function is as follows. Probably involved in nucleocytoplasmic transport via its interactions with importins and Ran, rather than by forming part of the nuclear pore complex (NPC) scaffolding. In Arabidopsis thaliana (Mouse-ear cress), this protein is Nuclear pore complex protein NUP50B.